The following is a 500-amino-acid chain: Lysine--tRNA ligase (500 aa).

Mg(2+) is bound by residues Glu410 and Glu417.

It belongs to the class-II aminoacyl-tRNA synthetase family. In terms of assembly, homodimer. Mg(2+) serves as cofactor.

The protein localises to the cytoplasm. The catalysed reaction is tRNA(Lys) + L-lysine + ATP = L-lysyl-tRNA(Lys) + AMP + diphosphate. This Mycoplasma capricolum subsp. capricolum (strain California kid / ATCC 27343 / NCTC 10154) protein is Lysine--tRNA ligase.